Here is a 514-residue protein sequence, read N- to C-terminus: ATP synthase subunit alpha (514 aa).

170–177 (GDRQIGKT) contacts ATP.

This sequence belongs to the ATPase alpha/beta chains family. F-type ATPases have 2 components, CF(1) - the catalytic core - and CF(0) - the membrane proton channel. CF(1) has five subunits: alpha(3), beta(3), gamma(1), delta(1), epsilon(1). CF(0) has three main subunits: a(1), b(2) and c(9-12). The alpha and beta chains form an alternating ring which encloses part of the gamma chain. CF(1) is attached to CF(0) by a central stalk formed by the gamma and epsilon chains, while a peripheral stalk is formed by the delta and b chains.

The protein localises to the cell inner membrane. It catalyses the reaction ATP + H2O + 4 H(+)(in) = ADP + phosphate + 5 H(+)(out). Functionally, produces ATP from ADP in the presence of a proton gradient across the membrane. The alpha chain is a regulatory subunit. This Stutzerimonas stutzeri (strain A1501) (Pseudomonas stutzeri) protein is ATP synthase subunit alpha.